The following is a 405-amino-acid chain: Acetylornithine/succinyldiaminopimelate aminotransferase (405 aa).

Pyridoxal 5'-phosphate-binding positions include 108–109 (GT) and Phe-141. Arg-144 is a binding site for N(2)-acetyl-L-ornithine. 226 to 229 (DEVQ) is a pyridoxal 5'-phosphate binding site. Residue Lys-255 is modified to N6-(pyridoxal phosphate)lysine. Ser-283 lines the N(2)-acetyl-L-ornithine pocket. Position 284 (Thr-284) interacts with pyridoxal 5'-phosphate.

The protein belongs to the class-III pyridoxal-phosphate-dependent aminotransferase family. ArgD subfamily. Homodimer. Pyridoxal 5'-phosphate serves as cofactor.

The protein localises to the cytoplasm. The catalysed reaction is N(2)-acetyl-L-ornithine + 2-oxoglutarate = N-acetyl-L-glutamate 5-semialdehyde + L-glutamate. It carries out the reaction N-succinyl-(2S,6S)-2,6-diaminopimelate + 2-oxoglutarate = (S)-2-succinylamino-6-oxoheptanedioate + L-glutamate. The protein operates within amino-acid biosynthesis; L-arginine biosynthesis; N(2)-acetyl-L-ornithine from L-glutamate: step 4/4. It participates in amino-acid biosynthesis; L-lysine biosynthesis via DAP pathway; LL-2,6-diaminopimelate from (S)-tetrahydrodipicolinate (succinylase route): step 2/3. Inhibited by gabaculine (Gcn). Involved in both the arginine and lysine biosynthetic pathways. The sequence is that of Acetylornithine/succinyldiaminopimelate aminotransferase from Salmonella typhimurium (strain LT2 / SGSC1412 / ATCC 700720).